The following is a 377-amino-acid chain: MAFTMQTGDLKKLKYFIDFALENPTFLNMPQLQFVKDFVEKFGGTVPPGQFNGGSAGGKCPFGGVAGAKANEPANAPEDSEDEKSLSDPESDVELDMEGVIEADSDPAQPMGNYSKKATEEEVEQASELRAQAASAYGQQKFDEAIALYTKAIELSPGNALFHAKRGQAFLKLKKPNACIRDCDVALELNSDLAAGYKFRGRARRLLGDFELAAHDLRQACKLDFDEETDEWLKEVTPNAKKIEQHRLKQERRQAERKIKERQRDQRRARKEQEKHNASSGGSSGEFSGGNPGNGNMSDILGAMSDPEVSAAIQDILSNPGNITKYASNPKIYNLIKKIVPGGDVGAAFGQAGEKAGKPSEPKPKKDSADFVDDGLD.

A disordered region spans residues 68 to 123 (AKANEPANAPEDSEDEKSLSDPESDVELDMEGVIEADSDPAQPMGNYSKKATEEEV). Residue S80 is modified to Phosphoserine. The segment covering 89–105 (PESDVELDMEGVIEADS) has biased composition (acidic residues). TPR repeat units lie at residues 126 to 159 (ASEL…SPGN), 161 to 193 (LFHA…NSDL), and 195 to 227 (AGYK…DFDE). Residues 239–276 (NAKKIEQHRLKQERRQAERKIKERQRDQRRARKEQEKH) adopt a coiled-coil conformation. The span at 243–277 (IEQHRLKQERRQAERKIKERQRDQRRARKEQEKHN) shows a compositional bias: basic and acidic residues. 2 disordered regions span residues 243–302 (IEQH…DILG) and 344–377 (DVGA…DGLD). Over residues 282-293 (GSSGEFSGGNPG) the composition is skewed to gly residues. Residues 294–336 (NGNMSDILGAMSDPEVSAAIQDILSNPGNITKYASNPKIYNLI) form the STI1 domain. A compositionally biased stretch (basic and acidic residues) spans 355 to 369 (KAGKPSEPKPKKDSA).

Belongs to the FAM10 family. Homotetramer. Interacts with Hsc70 as well as DNAJ homologs and Hsp90.

It is found in the cytoplasm. In terms of biological role, one HIP oligomer binds the ATPase domains of at least two Hsc70 molecules dependent on activation of the Hsc70 ATPase by Hsp40. Stabilizes the ADP state of Hsc70 that has a high affinity for substrate protein. Through its own chaperone activity, it may contribute to the interaction of Hsc70 with various target proteins. The polypeptide is Hsc70-interacting protein 2 (Drosophila melanogaster (Fruit fly)).